The following is a 228-amino-acid chain: MTMIIRKYFSGIPTIGVLALTTEEITLLPIFLDKDDVNEVSEVLETKCLQTNIGGSSLVGSLSVANKYGLLLPKIVEDEELDRIKNFLKENNLDLNVEIIKSKNTALGNLILTNDKGALISPELKDFKKDIEDSLNVEVEIGTIAELPTVGSNAVVTNKGCLTHPLVEDDELEFLKSLFKVEYIGKGTANKGTTSVGACIIANSKGAVVGGDTTGPELLIIEDALGLI.

Binds to the 50S ribosomal subunit and prevents its association with the 30S ribosomal subunit to form the 70S initiation complex. This chain is Translation initiation factor 6, found in Methanocaldococcus jannaschii (strain ATCC 43067 / DSM 2661 / JAL-1 / JCM 10045 / NBRC 100440) (Methanococcus jannaschii).